The sequence spans 99 residues: Aspartyl/glutamyl-tRNA(Asn/Gln) amidotransferase subunit C (99 aa).

This sequence belongs to the GatC family. As to quaternary structure, heterotrimer of A, B and C subunits.

The catalysed reaction is L-glutamyl-tRNA(Gln) + L-glutamine + ATP + H2O = L-glutaminyl-tRNA(Gln) + L-glutamate + ADP + phosphate + H(+). It carries out the reaction L-aspartyl-tRNA(Asn) + L-glutamine + ATP + H2O = L-asparaginyl-tRNA(Asn) + L-glutamate + ADP + phosphate + 2 H(+). Allows the formation of correctly charged Asn-tRNA(Asn) or Gln-tRNA(Gln) through the transamidation of misacylated Asp-tRNA(Asn) or Glu-tRNA(Gln) in organisms which lack either or both of asparaginyl-tRNA or glutaminyl-tRNA synthetases. The reaction takes place in the presence of glutamine and ATP through an activated phospho-Asp-tRNA(Asn) or phospho-Glu-tRNA(Gln). This chain is Aspartyl/glutamyl-tRNA(Asn/Gln) amidotransferase subunit C, found in Mycolicibacterium smegmatis (strain ATCC 700084 / mc(2)155) (Mycobacterium smegmatis).